Reading from the N-terminus, the 217-residue chain is Probable GTP-binding protein EngB (217 aa).

In terms of domain architecture, EngB-type G spans 44–217; that stretch reads DRIEVCFAGR…TLRTIVATLG (174 aa). GTP contacts are provided by residues 52–59, 79–83, 97–100, 164–167, and 198–200; these read GRSNVGKS, GRTQE, DLPG, TKAD, and TSS. Mg(2+)-binding residues include Ser59 and Thr81.

Belongs to the TRAFAC class TrmE-Era-EngA-EngB-Septin-like GTPase superfamily. EngB GTPase family. Mg(2+) serves as cofactor.

In terms of biological role, necessary for normal cell division and for the maintenance of normal septation. This chain is Probable GTP-binding protein EngB, found in Cereibacter sphaeroides (strain ATCC 17023 / DSM 158 / JCM 6121 / CCUG 31486 / LMG 2827 / NBRC 12203 / NCIMB 8253 / ATH 2.4.1.) (Rhodobacter sphaeroides).